The sequence spans 399 residues: Succinate--CoA ligase [ADP-forming] subunit beta (399 aa).

The ATP-grasp domain occupies 9–254; it reads KELLAKYGIG…ETEEDPAEVE (246 aa). ATP-binding positions include Lys46, 53–55, Val112, and Glu117; that span reads GRG. Mg(2+) is bound by residues Asn209 and Asp223. Substrate-binding positions include Asn274 and 331–333; that span reads GIM.

It belongs to the succinate/malate CoA ligase beta subunit family. In terms of assembly, heterotetramer of two alpha and two beta subunits. The cofactor is Mg(2+).

It carries out the reaction succinate + ATP + CoA = succinyl-CoA + ADP + phosphate. It catalyses the reaction GTP + succinate + CoA = succinyl-CoA + GDP + phosphate. It participates in carbohydrate metabolism; tricarboxylic acid cycle; succinate from succinyl-CoA (ligase route): step 1/1. Functionally, succinyl-CoA synthetase functions in the citric acid cycle (TCA), coupling the hydrolysis of succinyl-CoA to the synthesis of either ATP or GTP and thus represents the only step of substrate-level phosphorylation in the TCA. The beta subunit provides nucleotide specificity of the enzyme and binds the substrate succinate, while the binding sites for coenzyme A and phosphate are found in the alpha subunit. This is Succinate--CoA ligase [ADP-forming] subunit beta from Erythrobacter litoralis (strain HTCC2594).